The primary structure comprises 170 residues: Adenine phosphoribosyltransferase (170 aa).

The protein belongs to the purine/pyrimidine phosphoribosyltransferase family. As to quaternary structure, homodimer.

Its subcellular location is the cytoplasm. It catalyses the reaction AMP + diphosphate = 5-phospho-alpha-D-ribose 1-diphosphate + adenine. It functions in the pathway purine metabolism; AMP biosynthesis via salvage pathway; AMP from adenine: step 1/1. Functionally, catalyzes a salvage reaction resulting in the formation of AMP, that is energically less costly than de novo synthesis. In Alkaliphilus metalliredigens (strain QYMF), this protein is Adenine phosphoribosyltransferase.